The primary structure comprises 116 residues: MTDKYENPTSDDYMGVVMGIIMSGGNAKGLAFQAIQQAKDGKFAEAESSLNEASEQLREAHDVQTDLLTRLAQGEKIGWNLYMVHAQDHLMNAITFKDLAVEVVGQERRLQALENK.

Residues Asp11–Arg109 form the PTS EIIA type-3 domain. His85 acts as the Tele-phosphohistidine intermediate in catalysis. Residue His85 is modified to Phosphohistidine; by HPr. Mg(2+) is bound at residue Asp88.

In terms of assembly, homotrimer. Requires Mg(2+) as cofactor.

Its function is as follows. The phosphoenolpyruvate-dependent sugar phosphotransferase system (sugar PTS), a major carbohydrate active transport system, catalyzes the phosphorylation of incoming sugar substrates concomitantly with their translocation across the cell membrane. Involved in galactose transport with PtcB and Lmg_0963. This Lactococcus lactis subsp. cremoris (strain MG1363) protein is PTS system galactose-specific EIIA component.